The primary structure comprises 692 residues: Putative ESX-1 scaffolding and assembly protein SaeA (692 aa).

Residues Met-1–Pro-21 show a composition bias toward basic and acidic residues. 2 disordered regions span residues Met-1–Leu-23 and Pro-87–Phe-134. Residues Ala-89–Gly-107 show a composition bias toward pro residues.

Functionally, may be involved in assembly of the ESX-1 / type VII specialized secretion system (T7SS), which exports several proteins including EsxA and EsxB. Involved in DNA conjugation in recipient (MKD8) but not donor (mc(2)155) strain. The sequence is that of Putative ESX-1 scaffolding and assembly protein SaeA (saeA) from Mycolicibacterium smegmatis (strain MKD8) (Mycobacterium smegmatis).